Reading from the N-terminus, the 471-residue chain is Cysteine--tRNA ligase (471 aa).

Residue C30 coordinates Zn(2+). Residues 32–42 (PTVYNFAHIGN) carry the 'HIGH' region motif. Residues C212, H237, and E241 each contribute to the Zn(2+) site. A 'KMSKS' region motif is present at residues 270 to 274 (KMSKS). K273 contacts ATP.

The protein belongs to the class-I aminoacyl-tRNA synthetase family. Monomer. The cofactor is Zn(2+).

Its subcellular location is the cytoplasm. It catalyses the reaction tRNA(Cys) + L-cysteine + ATP = L-cysteinyl-tRNA(Cys) + AMP + diphosphate. This Leptospira interrogans serogroup Icterohaemorrhagiae serovar copenhageni (strain Fiocruz L1-130) protein is Cysteine--tRNA ligase.